We begin with the raw amino-acid sequence, 455 residues long: Ammonium transporter Rh type B (455 aa).

Topologically, residues 1–10 (MARIPRHRRL) are cytoplasmic. Residues 11-31 (VLPLLCLLFQGATSLLFAIFV) traverse the membrane as a helical segment. The Extracellular segment spans residues 32–58 (RYNHETDAALWHWGNHSNVDNEFYFRY). Asparagine 46 carries an N-linked (GlcNAc...) asparagine glycan. Residues 59–79 (PSFQDVHVMVFVGFGFLMVFL) form a helical membrane-spanning segment. Topologically, residues 80-83 (QRYG) are cytoplasmic. The chain crosses the membrane as a helical span at residues 84 to 104 (FSSVGFTFLVATFTLQWATLL). At 105 to 121 (QGFLHSFHGGHIHIGVE) the chain is on the extracellular side. A helical transmembrane segment spans residues 122-142 (SLINADFCAGAVLISFGAVLG). The Cytoplasmic segment spans residues 143 to 148 (KTGPAQ). A helical transmembrane segment spans residues 149-169 (LLLMALLEAVLFSVNEFILLS). The Extracellular portion of the chain corresponds to 170-176 (LLGVRDA). Residues 177 to 197 (GGSMTIHTFGAYFGLFLSRVL) traverse the membrane as a helical segment. The Cytoplasmic portion of the chain corresponds to 198–216 (YRSQLEKSRHRQTSVYNSD). Residues 217–237 (LFAMIGTIFLWVFWPSFNSAP) form a helical membrane-spanning segment. Residues 238-247 (TALGDGQHRT) lie on the Extracellular side of the membrane. A helical membrane pass occupies residues 248–270 (VVNTYYSLTASTLSTFALSALVS). Topologically, residues 271 to 274 (GDGR) are cytoplasmic. The helical transmembrane segment at 275-295 (LDMVHIQNAALAGGVVVGTAS) threads the bilayer. A topological domain (extracellular) is located at residue glutamate 296. A helical transmembrane segment spans residues 297 to 317 (MMLTPFGALAAGFLAGTVSTL). The Cytoplasmic portion of the chain corresponds to 318–340 (GYKFFTPILESRFKLQDTCGVHN). Residues 341–361 (LHGMPGLLGAILGVLVAALAT) traverse the membrane as a helical segment. The Extracellular portion of the chain corresponds to 362 to 390 (HEAYGDGLQTVFPLIAKGQRSATSQAMYQ). A helical transmembrane segment spans residues 391–411 (LFGMFVTLVFASVGGSLGGLL). Residues 412–455 (LKLPFLDSPPDSQCFEDQVYWEVPGEQEAETQRPLRTEEPDTQA) are Cytoplasmic-facing. An interaction with ANK3 region spans residues 413–421 (KLPFLDSPP).

It belongs to the ammonium transporter (TC 2.A.49) family. Rh subfamily. As to quaternary structure, interacts (via C-terminus) with ANK2 and ANK3; required for targeting to the basolateral membrane. N-glycosylated. Expressed in kidney by connecting segments and collecting tubules (at protein level).

It localises to the basolateral cell membrane. It is found in the cytoplasmic vesicle membrane. The enzyme catalyses NH4(+)(in) = NH4(+)(out). The catalysed reaction is methylamine(out) = methylamine(in). It carries out the reaction CO2(out) = CO2(in). In terms of biological role, ammonium transporter involved in the maintenance of acid-base homeostasis. Transports ammonium and its related derivative methylammonium across the basolateral plasma membrane of epithelial cells likely contributing to renal transepithelial ammonia transport and ammonia metabolism. May transport either NH4(+) or NH3 ammonia species predominantly mediating an electrogenic NH4(+) transport. May act as a CO2 channel providing for renal acid secretion. The protein is Ammonium transporter Rh type B (Rhbg) of Rattus norvegicus (Rat).